A 415-amino-acid polypeptide reads, in one-letter code: Leucine-rich repeat-containing protein 34 (415 aa).

LRR repeat units lie at residues 246 to 272 (SLRYLDVSCNKITRDGMVFLADVLKSN) and 274 to 296 (TLEVLDLSFNRIETAGAKYLSET).

Interacts with NPM1 and NCL. Expressed in testis where it specifically localizes to germ cells (at protein level). Not detected in other tissues tested (at protein level). Expressed in pluripotent embryonic stem cells and multipotent adult germline stem cells.

It is found in the nucleus. Its subcellular location is the nucleolus. The protein resides in the cytoplasm. In terms of biological role, highly expressed in stem cells where it may be involved in regulation of pluripotency. In embryonic stem cells (ESCs), important for normal expression of the pluripotency regulators POU5F1/OCT4 and KLF4. Also important for expression of the ectodermal marker gene NES and the endodermal marker gene GATA4. Promotes stem cell proliferation in vitro. The polypeptide is Leucine-rich repeat-containing protein 34 (Mus musculus (Mouse)).